The sequence spans 189 residues: MKGVPRTVAVVGVPGTGKTTVCRILSGMVRHTYINYGELMLRVAGEWNLAETLEDLFKLPMDQQHLIWLEAAHRIRRLDYVLMDLHGLDRSPLGYLISLPVDIISPDIIVILESDPQSILWRRMADSKMRVRESLESLREHMEMLRTSMFVCSAVLGSVVSIVENHDPEEAALDILGIIEAAWAGDTTP.

Gly-12–Thr-20 provides a ligand contact to ATP.

The protein belongs to the archaeal adenylate kinase family.

The chain is Adenylate kinase homolog MTH_1663 from Methanothermobacter thermautotrophicus (strain ATCC 29096 / DSM 1053 / JCM 10044 / NBRC 100330 / Delta H) (Methanobacterium thermoautotrophicum).